Here is a 218-residue protein sequence, read N- to C-terminus: 23 kDa integral membrane protein (218 aa).

Residues 1–12 (MATLGTGMRCLK) lie on the Cytoplasmic side of the membrane. Residues 13-36 (SCVFVLNIICLLCSLVLIGAGAYV) form a helical membrane-spanning segment. The Extracellular segment spans residues 37-55 (EVKFSQYGDNLHKVWQAAP). The helical transmembrane segment at 56 to 71 (IAIIVVGVIILIVSFL) threads the bilayer. The Cytoplasmic portion of the chain corresponds to 72–82 (GCCGAIKENVC). The chain crosses the membrane as a helical span at residues 83–108 (MLYMYAFFLVVLLIAELAAAIVAVVY). Over 109–183 (KDRIDSEIDA…SVFGAFLKRN (75 aa)) the chain is Extracellular. Residue Asn-165 is glycosylated (N-linked (GlcNAc...) asparagine). A helical transmembrane segment spans residues 184–205 (LVIVACVAFGVCFFQLLSIVIA). The Cytoplasmic portion of the chain corresponds to 206–218 (CCLGRQIKEYENV).

The protein belongs to the tetraspanin (TM4SF) family.

It is found in the membrane. The protein is 23 kDa integral membrane protein of Schistosoma mansoni (Blood fluke).